Reading from the N-terminus, the 623-residue chain is Sodium-coupled monocarboxylate transporter 2 (623 aa).

Residues 1–10 (METVGRFQAG) are Extracellular-facing. The helical transmembrane segment at 11-31 (DYVVFACLFVVSSGIGVFFAI) threads the bilayer. Over 32–50 (KERNKAPSKEFLVGGRQMS) the chain is Cytoplasmic. A helical transmembrane segment spans residues 51–71 (CGPVALSLTASFMSAVTVIGA). Residues 72–83 (PADVYRFGASYV) lie on the Extracellular side of the membrane. Residues 84-104 (IFGVAYTFVVFFTAELFLPVF) traverse the membrane as a helical segment. Topologically, residues 105-129 (YRSGITSTYEYLELRFCKLVRVAAT) are cytoplasmic. A helical transmembrane segment spans residues 130 to 150 (LIYIIQTILYTGVVVYAPALA). The Extracellular segment spans residues 151–158 (LNQVTGFD). The chain crosses the membrane as a helical span at residues 159–179 (LWGSIFATGIVCTFYCTLGGL). Topologically, residues 180–181 (KA) are cytoplasmic. A helical transmembrane segment spans residues 182–202 (VVWTDAFQMVVMVVGFLTVLI). The Extracellular segment spans residues 203–236 (QGSSRAGGIENVWSTSRTGGRLQVFDFDVSPLRR). Residues 237-257 (HTFWTLSVGGTFTWLGIYGVN) form a helical membrane-spanning segment. Topologically, residues 258–276 (QSTIQRCISCKTEGHARWA) are cytoplasmic. The chain crosses the membrane as a helical span at residues 277 to 297 (LYLNLLGLWIILFCAVVSGLI). The Extracellular segment spans residues 298 to 322 (MYSYYSHCDPWSSGLISAPDQLMPY). A helical transmembrane segment spans residues 323 to 343 (FVMEILGAFPGLPGLFVACAF). At 344 to 386 (SGTLSTVAASINALATVMYEDFVSQCFPDLSNRAASWISKALC) the chain is on the cytoplasmic side. Residues 387 to 407 (VAFGVACTTMAVAASYMGGIV) form a helical membrane-spanning segment. The Extracellular portion of the chain corresponds to 408–412 (QAALS). The chain crosses the membrane as a helical span at residues 413-433 (IHGMCGGPVLGLFSLGILFPF). Residues 434–438 (TNLKG) lie on the Cytoplasmic side of the membrane. A helical transmembrane segment spans residues 439-459 (AVGGLIVGISLSFWVGVGAFI). The Extracellular portion of the chain corresponds to 460–510 (YPAPSNNTHALELNTAGCNITAAAFEPTSATVTQLTSDRNWLADSWYSMSY). N-linked (GlcNAc...) asparagine glycans are attached at residues Asn465 and Asn478. The helical transmembrane segment at 511–531 (LYYSAVGFIGTVAAGLLITLL) threads the bilayer. At 532-623 (TGPMDPKLLK…NETSIVQKKL (92 aa)) the chain is on the cytoplasmic side.

The protein belongs to the sodium:solute symporter (SSF) (TC 2.A.21) family.

The protein localises to the apical cell membrane. The enzyme catalyses (S)-lactate(out) + Na(+)(out) = (S)-lactate(in) + Na(+)(in). The catalysed reaction is nicotinate(out) + Na(+)(out) = nicotinate(in) + Na(+)(in). It carries out the reaction pyruvate(out) + Na(+)(out) = pyruvate(in) + Na(+)(in). It catalyses the reaction propanoate(out) + Na(+)(out) = propanoate(in) + Na(+)(in). The enzyme catalyses butanoate(out) + Na(+)(out) = butanoate(in) + Na(+)(in). The catalysed reaction is acetoacetate(out) + Na(+)(out) = acetoacetate(in) + Na(+)(in). Functionally, acts as an electroneutral and low-affinity sodium (Na(+))-dependent sodium-coupled solute transporter. Catalyzes the transport across the plasma membrane of many monocarboxylates such as lactate, pyruvate, nicotinate, propionate, butyrate and beta-D-hydroxybutyrate. This is Sodium-coupled monocarboxylate transporter 2 (slc5a12) from Danio rerio (Zebrafish).